A 295-amino-acid polypeptide reads, in one-letter code: MERKLGTDRVKRGMAQMQKGGVIMDVVNSEQAKIAEQAGAVAVMALERVPSDIRAAGGVARMANPSLVEEIIQSVSIPVMAKARIGHIVEARVLESLGVDYIDESEVLTPADEVFHLNKSDYTVPFVCGCRDLGEAARRIGEGAAMLRTKGEPGTGNIVEAVRHIREVQAQVNKVVHMSKDELMTEAKNLGAPYEILLQIKENGRLPVVNFAAGGVATPADAALMMELGADGVFVGSGIFKSHHPEKFARAIVQATTYFDDYERIAEVSKDLGEAMTGIDVHSLAADQRMQERGW.

D25 provides a ligand contact to D-ribose 5-phosphate. K82 serves as the catalytic Schiff-base intermediate with D-ribose 5-phosphate. D-ribose 5-phosphate is bound at residue G154. R166 contacts D-glyceraldehyde 3-phosphate. Residues G215 and 236–237 (GS) contribute to the D-ribose 5-phosphate site.

This sequence belongs to the PdxS/SNZ family. As to quaternary structure, in the presence of PdxT, forms a dodecamer of heterodimers.

The catalysed reaction is aldehydo-D-ribose 5-phosphate + D-glyceraldehyde 3-phosphate + L-glutamine = pyridoxal 5'-phosphate + L-glutamate + phosphate + 3 H2O + H(+). It functions in the pathway cofactor biosynthesis; pyridoxal 5'-phosphate biosynthesis. Functionally, catalyzes the formation of pyridoxal 5'-phosphate from ribose 5-phosphate (RBP), glyceraldehyde 3-phosphate (G3P) and ammonia. The ammonia is provided by the PdxT subunit. Can also use ribulose 5-phosphate and dihydroxyacetone phosphate as substrates, resulting from enzyme-catalyzed isomerization of RBP and G3P, respectively. This Oceanobacillus iheyensis (strain DSM 14371 / CIP 107618 / JCM 11309 / KCTC 3954 / HTE831) protein is Pyridoxal 5'-phosphate synthase subunit PdxS.